Here is a 456-residue protein sequence, read N- to C-terminus: Protein translocase subunit SecY (456 aa).

Residues Met1–Pro21 lie on the Cytoplasmic side of the membrane. Residues Gly22–Pro48 form a helical membrane-spanning segment. The Extracellular portion of the chain corresponds to Leu49 to Gln59. Residues Phe60–Leu67 constitute an intramembrane region (helical). Residues Phe60–Ile88 traverse the membrane as a discontinuously helical segment. The stretch at Ala68 to Ile79 is an intramembrane region. An intramembrane region (helical) is located at residues Gly80–Ile88. The Cytoplasmic portion of the chain corresponds to Leu89–Ala109. The chain crosses the membrane as a helical span at residues Phe110–Gly134. At Ser135–Pro141 the chain is on the extracellular side. The chain crosses the membrane as a helical span at residues Gln142–Ser166. The Cytoplasmic segment spans residues Lys167 to Ser172. The helical transmembrane segment at Gly173–Phe191 threads the bilayer. Residues Asn192–Tyr224 are Extracellular-facing. Residues Tyr225 to Arg246 traverse the membrane as a helical segment. Residues Val247–Ser275 lie on the Cytoplasmic side of the membrane. Residues Asn276–Gln297 traverse the membrane as a helical segment. The Extracellular portion of the chain corresponds to Lys298–Phe334. A helical transmembrane segment spans residues Arg335–Trp354. The Cytoplasmic segment spans residues Val355 to Ile397. The chain crosses the membrane as a helical span at residues Thr398–Gly416. Residues Ser417–Gly419 lie on the Extracellular side of the membrane. A helical transmembrane segment spans residues Gly420–Leu434. The Cytoplasmic segment spans residues Tyr435–Asp456.

Belongs to the SecY/SEC61-alpha family. Component of the Sec protein translocase complex. Heterotrimer consisting of alpha (SecY), beta (SecG) and gamma (SecE) subunits. The heterotrimers can form oligomers, although 1 heterotrimer is thought to be able to translocate proteins. Interacts with the ribosome. May interact with SecDF, and other proteins may be involved.

Its subcellular location is the cell membrane. Its function is as follows. The central subunit of the protein translocation channel SecYEG. Consists of two halves formed by TMs 1-5 and 6-10. These two domains form a lateral gate at the front which open onto the bilayer between TMs 2 and 7, and are clamped together by SecE at the back. The channel is closed by both a pore ring composed of hydrophobic SecY resides and a short helix (helix 2A) on the extracellular side of the membrane which forms a plug. The plug probably moves laterally to allow the channel to open. The ring and the pore may move independently. This Methanothermobacter thermautotrophicus (strain ATCC 29096 / DSM 1053 / JCM 10044 / NBRC 100330 / Delta H) (Methanobacterium thermoautotrophicum) protein is Protein translocase subunit SecY.